The primary structure comprises 86 residues: Beta-toxin To4 (86 aa).

The first 20 residues, 1-20 (MTRFVLFISCFFLIGMIVEC), serve as a signal peptide directing secretion. Residues 21 to 83 (KDGYLMEYGG…IWNRATNKCG (63 aa)) form the LCN-type CS-alpha/beta domain. 4 disulfide bridges follow: C31/C82, C35/C57, C43/C63, and C47/C65. C82 carries the post-translational modification Cysteine amide.

Belongs to the long (4 C-C) scorpion toxin superfamily. Sodium channel inhibitor family. Beta subfamily. In terms of tissue distribution, expressed by the venom gland.

Its subcellular location is the secreted. In terms of biological role, beta toxins bind voltage-independently at site-4 of sodium channels (Nav) and shift the voltage of activation toward more negative potentials thereby affecting sodium channel activation and promoting spontaneous and repetitive firing. This toxin shows moderate inhibition of Nav1.1/SCN1A, Nav1.2/SCN2A, and Nav1.4/SCN4A, and promotes a left voltage shift on these channels. It exhibits similar potency on Nav1.2/SCN2A and Nav1.4/SCN4A (40-50% peak current inhibition at 0.5 uM), and weaker inhibition on Nav1.2 (20-30% peak current inhibition at 0.5 uM). In Tityus obscurus (Amazonian scorpion), this protein is Beta-toxin To4.